The sequence spans 333 residues: D-glutamate N-acetyltransferase (333 aa).

The protein belongs to the N-acetyltransferase DgcN family.

The catalysed reaction is D-glutamate + acetyl-CoA = N-acetyl-D-glutamate + CoA + H(+). Its pathway is amino-acid degradation. Functionally, N-acetyltransferase involved in a deamination-independent D-glutamate degradation pathway, named the DgcN-DgcA pathway. Catalyzes the transfer of the acetyl moiety from acetyl-CoA to D-glutamate to generate N-acetyl-D-glutamate. The sequence is that of D-glutamate N-acetyltransferase from Tritonibacter scottomollicae (Epibacterium scottomollicae).